Reading from the N-terminus, the 356-residue chain is Cyclin-D4-1 (356 aa).

The protein belongs to the cyclin family. Cyclin D subfamily.

The protein is Cyclin-D4-1 (CYCD4-1) of Oryza sativa subsp. japonica (Rice).